Reading from the N-terminus, the 1000-residue chain is SEC23-interacting protein (1000 aa).

The interval 1–367 (MAERKPNGGS…YTEEFSEKLE (367 aa)) is interaction with SEC23A. The disordered stretch occupies residues 133-252 (FSPSISKAQP…QQVPARPGAP (120 aa)). A compositionally biased stretch (low complexity) spans 154–167 (SYLPSQPSSLPPSY). The span at 207–218 (PGPPAHPPPSGP) shows a compositional bias: pro residues. The segment covering 235 to 246 (SSVQSPAQQQVP) has biased composition (low complexity). Residues 644-707 (KEVLTLQETL…NFVEHKAAKL (64 aa)) enclose the SAM domain. Residues 716–748 (AVAATSTKGQEQSAQKTKDMASLPSESNEPKRK) form a disordered region. Residues serine 737 and serine 926 each carry the phosphoserine modification. The DDHD domain maps to 779 to 989 (LDFEPEIFFA…ALLLLKEIYR (211 aa)).

It belongs to the PA-PLA1 family. Interacts with SEC23A. Ubiquitously expressed with stronger levels detected in heart, liver and skeletal muscle.

The protein localises to the cytoplasmic vesicle. It is found in the COPII-coated vesicle membrane. It localises to the endoplasmic reticulum. Its function is as follows. Plays a role in the organization of endoplasmic reticulum exit sites. Specifically binds to phosphatidylinositol 3-phosphate (PI(3)P), phosphatidylinositol 4-phosphate (PI(4)P) and phosphatidylinositol 5-phosphate (PI(5)P). The chain is SEC23-interacting protein (SEC23IP) from Homo sapiens (Human).